Consider the following 204-residue polypeptide: LexA repressor (204 aa).

The H-T-H motif DNA-binding region spans 31–51 (VREIGQAVGLKSSSTVHTHLV). Active-site for autocatalytic cleavage activity residues include S128 and K165.

The protein belongs to the peptidase S24 family. Homodimer.

It carries out the reaction Hydrolysis of Ala-|-Gly bond in repressor LexA.. Represses a number of genes involved in the response to DNA damage (SOS response), including recA and lexA. In the presence of single-stranded DNA, RecA interacts with LexA causing an autocatalytic cleavage which disrupts the DNA-binding part of LexA, leading to derepression of the SOS regulon and eventually DNA repair. This chain is LexA repressor, found in Syntrophomonas wolfei subsp. wolfei (strain DSM 2245B / Goettingen).